A 194-amino-acid polypeptide reads, in one-letter code: Factor in the germline alpha (194 aa).

Residues 59-111 (ERRRVANAKERERIKNLNRGFAKLKALVPFLPQSRKPSKVDILKGATEYIQIL) enclose the bHLH domain. Residues 121–137 (SEKQSPEEQTHSGRPSD) are compositionally biased toward basic and acidic residues. A disordered region spans residues 121–163 (SEKQSPEEQTHSGRPSDPHVSSTRELLGNATQPTSCASGLKKE). The span at 139 to 157 (HVSSTRELLGNATQPTSCA) shows a compositional bias: polar residues.

As to quaternary structure, heterodimer with TCF3/isoform E12. As to expression, expressed only in the oocytes within the ovary and at lower level in the testis. Found in the resting oocytes of the primordial follicle cells, at the periphery of the ovary and in the hilar region. Also detected in growing oocytes, but at lower levels.

It is found in the nucleus. In terms of biological role, germ-line specific transcription factor implicated in postnatal oocyte-specific gene expression. Plays a key regulatory role in the expression of multiple oocyte-specific genes, including those that initiate folliculogenesis and those that encode the zona pellucida (ZP1, ZP2 and ZP3) required for fertilization and early embryonic survival. Essential for oocytes to survive and form primordial follicles. The persistence of FIGLA in adult females suggests that it may regulate additional pathways that are essential for normal ovarian development. Binds to the E-box (5'-CANNTG-3') of the ZPs (ZP1, ZP2, ZP3) promoters. The sequence is that of Factor in the germline alpha (Figla) from Mus musculus (Mouse).